Here is a 143-residue protein sequence, read N- to C-terminus: Transcriptional regulator MraZ (143 aa).

SpoVT-AbrB domains follow at residues 5-47 (EFEH…PMTE) and 76-119 (ATEC…SAER).

It belongs to the MraZ family. As to quaternary structure, forms oligomers.

Its subcellular location is the cytoplasm. It is found in the nucleoid. This Levilactobacillus brevis (strain ATCC 367 / BCRC 12310 / CIP 105137 / JCM 1170 / LMG 11437 / NCIMB 947 / NCTC 947) (Lactobacillus brevis) protein is Transcriptional regulator MraZ.